A 224-amino-acid polypeptide reads, in one-letter code: Cytidylate kinase (224 aa).

10–18 (GPSGVGKGT) contacts ATP.

The protein belongs to the cytidylate kinase family. Type 1 subfamily.

The protein resides in the cytoplasm. The enzyme catalyses CMP + ATP = CDP + ADP. The catalysed reaction is dCMP + ATP = dCDP + ADP. The polypeptide is Cytidylate kinase (Haemophilus ducreyi (strain 35000HP / ATCC 700724)).